A 341-amino-acid polypeptide reads, in one-letter code: Phosphoribosylformylglycinamidine cyclo-ligase (341 aa).

The protein belongs to the AIR synthase family.

Its subcellular location is the cytoplasm. It catalyses the reaction 2-formamido-N(1)-(5-O-phospho-beta-D-ribosyl)acetamidine + ATP = 5-amino-1-(5-phospho-beta-D-ribosyl)imidazole + ADP + phosphate + H(+). It functions in the pathway purine metabolism; IMP biosynthesis via de novo pathway; 5-amino-1-(5-phospho-D-ribosyl)imidazole from N(2)-formyl-N(1)-(5-phospho-D-ribosyl)glycinamide: step 2/2. The polypeptide is Phosphoribosylformylglycinamidine cyclo-ligase (Alkaliphilus oremlandii (strain OhILAs) (Clostridium oremlandii (strain OhILAs))).